The primary structure comprises 372 residues: Alpha-parvin (372 aa).

The span at 1 to 11 (MATSPQKSPSV) shows a compositional bias: low complexity. The disordered stretch occupies residues 1-45 (MATSPQKSPSVPKSPTPKSPPSRKKDDSFLGKLGGTLARRKKAKE). Position 2 is an N-acetylalanine (Ala-2). 3 positions are modified to phosphoserine: Ser-8, Ser-14, and Ser-19. Residues 21 to 25 (PSRKK) are interaction with ARHGAP31. Phosphoserine is present on residues Ser-28 and Ser-62. Calponin-homology (CH) domains follow at residues 95–202 (QELM…QYFR) and 262–369 (NVVK…TKYR). The interval 223–372 (GILQSRQIQE…NLFTKYRNVE (150 aa)) is required for interaction with TESK1 and ILK.

Belongs to the parvin family. Component of the heterotrimeric IPP (ILK-PINCH-PARVIN) complex composed of ILK, LIMS1/PINCH and PARVA; the complex binds to F-actin via the C-terminal tail of LIMS1 and the N-terminal region of PARVA, promoting F-actin filament bundling. Formation of the IPP complex is dependent on protein kinase C and precedes integrin-mediated cell adhesion and spreading. Interacts with TGFB1I1. Interacts with ARHGAP31. Interacts with the actin cytoskeleton. Interacts (via C-terminus) with TESK1 (via C-terminus); the interaction inhibits TESK1 kinase activity. Interacts with PXN/PAXILLIN (via LD motif 4). Widely expressed, with highest levels in heart, skeletal muscle, kidney and liver.

The protein localises to the cell junction. Its subcellular location is the focal adhesion. It localises to the cell membrane. It is found in the cytoplasm. The protein resides in the cytoskeleton. The protein localises to the myofibril. Its subcellular location is the sarcomere. It localises to the z line. Functionally, plays a role in sarcomere organization and in smooth muscle cell contraction. Required for normal development of the embryonic cardiovascular system, and for normal septation of the heart outflow tract. Plays a role in sprouting angiogenesis and is required for normal adhesion of vascular smooth muscle cells to endothelial cells during blood vessel development. Plays a role in the reorganization of the actin cytoskeleton, formation of lamellipodia and ciliogenesis. Plays a role in the establishment of cell polarity, cell adhesion, cell spreading, and directed cell migration. Within the IPP (ILK-PINCH-PARVIN) complex, binds to F-actin, promoting F-actin bundling, a process required to generate force for actin cytoskeleton reorganization and subsequent dynamic cell adhesion events such as cell spreading and migration. In Homo sapiens (Human), this protein is Alpha-parvin (PARVA).